Here is a 1230-residue protein sequence, read N- to C-terminus: Ubiquitin carboxyl-terminal hydrolase 15 (1230 aa).

An MATH domain is found at 39–179 (EDSFTWNIPD…EGTLNITAYV (141 aa)). One can recognise a USP domain in the interval 205–536 (VGFRNQGATC…SAYMLVYIRQ (332 aa)). The active-site Nucleophile is the C214. The Proton acceptor role is filled by H465.

This sequence belongs to the peptidase C19 family. In terms of assembly, interacts with PEX6; promoting association with the PEX1-PEX6 ATPase complex.

It localises to the cytoplasm. It is found in the cytosol. The protein resides in the peroxisome. The enzyme catalyses Thiol-dependent hydrolysis of ester, thioester, amide, peptide and isopeptide bonds formed by the C-terminal Gly of ubiquitin (a 76-residue protein attached to proteins as an intracellular targeting signal).. Functionally, deubiquitinase involved in peroxisome import by mediating deubiquitination of the peroxisomal import receptor PEX5. Catalyzes deubiquitination of both monoubiquitiated and polyubiquitinated forms of PEX5 following its retrotranslocation into the cytosol, resetting PEX5 for a subsequent import cycle. The polypeptide is Ubiquitin carboxyl-terminal hydrolase 15 (Saccharomyces cerevisiae (strain ATCC 204508 / S288c) (Baker's yeast)).